The sequence spans 333 residues: Acyl-CoA wax alcohol acyltransferase 2 (333 aa).

3 helical membrane-spanning segments follow: residues 15–35 (VFALFQWALSALVIVTTVIIV), 38–58 (YLVVFTSYWPVTVLMLTWLAF), and 130–150 (TFPGITPYMLTLGAFFWVPFL).

Belongs to the diacylglycerol acyltransferase family. Monomer. In terms of tissue distribution, expressed in Mueller cells of the retina (at protein level). Abundant in tissues rich in sebaceous glands such as the preputial gland and eyelid.

Its subcellular location is the endoplasmic reticulum membrane. It catalyses the reaction a long chain fatty alcohol + a fatty acyl-CoA = a wax ester + CoA. The catalysed reaction is all-trans-retinol + an acyl-CoA = an all-trans-retinyl ester + CoA. The enzyme catalyses an acyl-CoA + a 1,2-diacyl-sn-glycerol = a triacyl-sn-glycerol + CoA. It carries out the reaction 9-cis-retinol + a fatty acyl-CoA = 9-cis-retinyl ester + CoA. It catalyses the reaction 11-cis-retinol + a fatty acyl-CoA = 11-cis-retinyl ester + CoA. The catalysed reaction is 13-cis-retinol + a fatty acyl-CoA = 13-cis-retinyl ester + CoA. The enzyme catalyses a 1-acylglycerol + an acyl-CoA = a 1,2-diacylglycerol + CoA. It carries out the reaction 1-O-alkylglycerol + an acyl-CoA = 1-O-alkyl-3-acylglycerol + CoA. It catalyses the reaction a 2-acylglycerol + an acyl-CoA = a 1,2-diacyl-sn-glycerol + CoA. The catalysed reaction is 2-(9Z-octadecenoyl)-glycerol + hexadecanoyl-CoA = 1-hexadecanoyl-2-(9Z-octadecenoyl)-sn-glycerol + CoA. The enzyme catalyses 1,2-di-(9Z-octadecenoyl)-sn-glycerol + hexadecanoyl-CoA = 1,2-di-(9Z)-octadecenoyl-3-hexadecanoyl-sn-glycerol + CoA. It carries out the reaction hexadecan-1-ol + hexadecanoyl-CoA = hexadecanyl hexadecanoate + CoA. It catalyses the reaction hexadecane-1,2-diol + hexadecanoyl-CoA = 2-hydroxyhexadecyl hexadecanoate + CoA. The catalysed reaction is all-trans-retinol + hexadecanoyl-CoA = all-trans-retinyl hexadecanoate + CoA. The enzyme catalyses 1,2-di-(9Z-octadecenoyl)-sn-glycerol + (9Z)-octadecenoyl-CoA = 1,2,3-tri-(9Z-octadecenoyl)-glycerol + CoA. It carries out the reaction hexadecan-1-ol + (9Z)-octadecenoyl-CoA = hexadecanyl (9Z)-octadecenoate + CoA. It catalyses the reaction (9Z)-hexadecen-1-ol + (9Z)-octadecenoyl-CoA = 1-O-(9Z)-hexadecenyl (9Z)-octadecenoate + CoA. The catalysed reaction is octadecan-1-ol + (9Z)-octadecenoyl-CoA = 1-O-octadecyl (9Z)-octadecenoate + CoA. The enzyme catalyses (9Z)-octadecen-1-ol + (9Z)-octadecenoyl-CoA = 1-O-(9Z)-octadecenyl (9Z)-octadecenoate + CoA. It carries out the reaction hexadecan-1-ol + (9Z)-hexadecenoyl-CoA = 1-O-hexadecyl (9Z)-hexadecenoate + CoA. It catalyses the reaction hexadecan-1-ol + octadecanoyl-CoA = hexadecanyl octadecanoate + CoA. The catalysed reaction is 11-cis-retinol + hexadecanoyl-CoA = 11-cis-retinyl hexadecanoate + CoA. The enzyme catalyses 1-O-(9Z-octadecenyl)-glycerol + (9Z)-octadecenoyl-CoA = 1-O-(9Z-octadecyl)-3-(9Z-octadecenoyl)-glycerol + CoA. It carries out the reaction 1-(9Z-octadecenoyl)-glycerol + (9Z)-octadecenoyl-CoA = 1,2-di-(9Z-octadecenoyl)-glycerol + CoA. It catalyses the reaction 11-cis-retinol + tetradecanoyl-CoA = 11-cis-retinyl tetradecanoate + CoA. The catalysed reaction is 9-cis-retinol + tetradecanoyl-CoA = 9-cis-retinyl tetradecanoate + CoA. The enzyme catalyses 9-cis-retinol + hexadecanoyl-CoA = 9-cis-retinyl hexadecanoate + CoA. It carries out the reaction 13-cis-retinol + tetradecanoyl-CoA = 13-cis-retinyl tetradecanoate + CoA. It catalyses the reaction all-trans-retinol + tetradecanoyl-CoA = all-trans-retinyl tetradecanoate + CoA. The catalysed reaction is tetradecan-1-ol + tetradecanoyl-CoA = tetradecanyl tetradecanoate + CoA. With respect to regulation, 11-cis retinoids act as allosteric modulators of acyl-CoA retinol O-fatty-acyltransferase (ARAT) activity by suppressing esterification of 9-cis, 13-cis, or all-trans retinols concurrently increasing the enzyme specificity toward 11-cis isomer. In terms of biological role, acyltransferase that catalyzes the formation of ester bonds between fatty alcohols and fatty acyl-CoAs to form wax monoesters. Shows a preference for medium chain acyl-CoAs from C12 to C16 in length and fatty alcohols shorter than C20, as the acyl donor and acceptor, respectively. Also possesses fatty acyl-CoA retinol acyltransferase (ARAT) activity that preferentially esterifies 11-cis-retinol, a chromophore precursor of bleached opsin pigments in cone cells. Shows higher catalytic efficiency toward 11-cis-retinol versus 9-cis-retinol, 13- cis-retinol and all-trans-retinol substrates. The chain is Acyl-CoA wax alcohol acyltransferase 2 (Awat2) from Mus musculus (Mouse).